Reading from the N-terminus, the 702-residue chain is Methionine--tRNA ligase (702 aa).

Positions P14 to H24 match the 'HIGH' region motif. Zn(2+)-binding residues include C146, C149, C159, and C162. The 'KMSKS' region signature appears at K344–S348. K347 lines the ATP pocket. The region spanning D601 to Q702 is the tRNA-binding domain.

The protein belongs to the class-I aminoacyl-tRNA synthetase family. MetG type 1 subfamily. Homodimer. The cofactor is Zn(2+).

Its subcellular location is the cytoplasm. It carries out the reaction tRNA(Met) + L-methionine + ATP = L-methionyl-tRNA(Met) + AMP + diphosphate. In terms of biological role, is required not only for elongation of protein synthesis but also for the initiation of all mRNA translation through initiator tRNA(fMet) aminoacylation. The sequence is that of Methionine--tRNA ligase from Chlorobium luteolum (strain DSM 273 / BCRC 81028 / 2530) (Pelodictyon luteolum).